We begin with the raw amino-acid sequence, 212 residues long: Inner membrane-spanning protein YciB (212 aa).

Helical transmembrane passes span 49–69 (APVLLATVVVILATLAQVLYL), 78–98 (TMLWVSLGLVTVMGGATIWFH), 105–125 (WKPSVLYWVMSAAFLLAPIVA), 150–170 (LAWAAFFAGMGVLNIWVAYNF), and 178–198 (FKAFGGMGLMFVFMLAQGLYM).

This sequence belongs to the YciB family.

It localises to the cell inner membrane. Plays a role in cell envelope biogenesis, maintenance of cell envelope integrity and membrane homeostasis. The polypeptide is Inner membrane-spanning protein YciB (Leptothrix cholodnii (strain ATCC 51168 / LMG 8142 / SP-6) (Leptothrix discophora (strain SP-6))).